A 689-amino-acid polypeptide reads, in one-letter code: Glycine--tRNA ligase beta subunit (689 aa).

This sequence belongs to the class-II aminoacyl-tRNA synthetase family. As to quaternary structure, tetramer of two alpha and two beta subunits.

The protein localises to the cytoplasm. The catalysed reaction is tRNA(Gly) + glycine + ATP = glycyl-tRNA(Gly) + AMP + diphosphate. This is Glycine--tRNA ligase beta subunit from Cronobacter sakazakii (strain ATCC BAA-894) (Enterobacter sakazakii).